A 294-amino-acid chain; its full sequence is Thymidylate synthase (294 aa).

Residues R30 and 156 to 157 (RR) contribute to the dUMP site. C176 acts as the Nucleophile in catalysis. DUMP is bound by residues 196 to 199 (RSGD), N207, and 237 to 239 (HVY). D199 is a (6R)-5,10-methylene-5,6,7,8-tetrahydrofolate binding site. A293 is a binding site for (6R)-5,10-methylene-5,6,7,8-tetrahydrofolate.

This sequence belongs to the thymidylate synthase family. Homodimer.

The enzyme catalyses dUMP + (6R)-5,10-methylene-5,6,7,8-tetrahydrofolate = 7,8-dihydrofolate + dTMP. It participates in pyrimidine metabolism; dTTP biosynthesis. The sequence is that of Thymidylate synthase from Ascaris suum (Pig roundworm).